We begin with the raw amino-acid sequence, 383 residues long: PqqA peptide cyclase (383 aa).

Residues 11–226 (PGPPLWLLAE…TNQWREKLAA (216 aa)) enclose the Radical SAM core domain. Cys-25, Cys-29, and Cys-32 together coordinate [4Fe-4S] cluster.

This sequence belongs to the radical SAM superfamily. PqqE family. In terms of assembly, interacts with PqqD. The interaction is necessary for activity of PqqE. [4Fe-4S] cluster serves as cofactor.

The enzyme catalyses [PQQ precursor protein] + S-adenosyl-L-methionine = E-Y cross-linked-[PQQ precursor protein] + 5'-deoxyadenosine + L-methionine + H(+). The protein operates within cofactor biosynthesis; pyrroloquinoline quinone biosynthesis. Its function is as follows. Catalyzes the cross-linking of a glutamate residue and a tyrosine residue in the PqqA protein as part of the biosynthesis of pyrroloquinoline quinone (PQQ). The sequence is that of PqqA peptide cyclase from Azotobacter vinelandii (strain DJ / ATCC BAA-1303).